The sequence spans 285 residues: Phosphatidylglycerol--prolipoprotein diacylglyceryl transferase (285 aa).

A run of 4 helical transmembrane segments spans residues 26–46 (IALHWYGLGYVVGILFSWWYV), 71–91 (FVVWAALGIVVGGRLGQVLIW), 107–127 (WDGGMSFHGGLIGTTIAIIWF), and 133–153 (INIWAMFDTIAAGAPFGIGVV). Residue R154 participates in a 1,2-diacyl-sn-glycero-3-phospho-(1'-sn-glycerol) binding. 3 consecutive transmembrane segments (helical) span residues 194 to 214 (LMEGFLLFIVLAFIIFAFKAF), 218 to 238 (GTVAGTFIISYGIARTISEIF), and 256 to 276 (GFTYGMALSLPMILFGFYAIF).

The protein belongs to the Lgt family.

The protein localises to the cell inner membrane. The catalysed reaction is L-cysteinyl-[prolipoprotein] + a 1,2-diacyl-sn-glycero-3-phospho-(1'-sn-glycerol) = an S-1,2-diacyl-sn-glyceryl-L-cysteinyl-[prolipoprotein] + sn-glycerol 1-phosphate + H(+). The protein operates within protein modification; lipoprotein biosynthesis (diacylglyceryl transfer). Its function is as follows. Catalyzes the transfer of the diacylglyceryl group from phosphatidylglycerol to the sulfhydryl group of the N-terminal cysteine of a prolipoprotein, the first step in the formation of mature lipoproteins. The chain is Phosphatidylglycerol--prolipoprotein diacylglyceryl transferase from Bartonella bacilliformis (strain ATCC 35685 / KC583 / Herrer 020/F12,63).